Consider the following 142-residue polypeptide: Hemoglobin subunit alpha-A (142 aa).

Residues V2–R142 form the Globin domain. Position 59 (H59) interacts with O2. Residue H88 coordinates heme b.

It belongs to the globin family. Heterotetramer of two alpha chains and two beta chains. As to expression, red blood cells.

Involved in oxygen transport from the lung to the various peripheral tissues. The sequence is that of Hemoglobin subunit alpha-A (HBAA) from Anas platyrhynchos (Mallard).